A 464-amino-acid chain; its full sequence is MPRAKRRKRASPTDLYRTCKQAGTCPPDIIPRLEQNTLADKILKWGSLGVFFGGLGIGTGSGTGGRTGYIPVGTRPTTVVDIGVAPKPPVVIEPVGASEPSIVTLVEDSSIINAGASHPTFTGTGGFEVTTSTVTDPAVLDITPSGTSVQVSSSSFLNPLYTEPAIVEAPQTGEVSGHVLVSTATSGSHGYEEIPMQTFATSGGSGQEPISSTPLPGVRRVAGPRLYSRANQQVQVRDPAFLERPADLVTFDNPVYDPEETIIFQHPDFHEPPDPDFLDIVALHRPALTSRQGTVRFSRLGRRATLRTRSGKQIGARVHFYHDISPVVPDELEMEPLLPPASTVGSDVLYDVYADPDVLQPLDDYYPAPRGSLANTTVSASSASTLRGSTTAPLSGGVDVPVYTGPDIEPPVVPGLGPLIPVAPSLPSSVYIFGGDYYLLPSYILWPKRRKRVNYFFADGFVAA.

The Nuclear localization signal signature appears at 1–10 (MPRAKRRKRA). Cysteine 19 and cysteine 25 are oxidised to a cystine. The short motif at 445-453 (LWPKRRKRV) is the Nuclear localization signal element.

It belongs to the papillomaviridae L2 protein family. As to quaternary structure, interacts with major capsid protein L1. Interacts with E2; this interaction inhibits E2 transcriptional activity but not the DNA replication function E2. Interacts with host GADD45GIP1. Interacts with host HSPA8; this interaction is required for L2 nuclear translocation. Interacts with host importins KPNB2 and KPNB3. Forms a complex with importin alpha2-beta1 heterodimers via interaction with the importin alpha2 adapter. Interacts with host DYNLT1; this interaction is essential for virus intracellular transport during entry. Interacts (via C-terminus) with host retromer subunits VPS35 and VPS29. Highly phosphorylated.

It is found in the virion. The protein localises to the host nucleus. It localises to the host early endosome. Its subcellular location is the host Golgi apparatus. Minor protein of the capsid that localizes along the inner surface of the virion, within the central cavities beneath the L1 pentamers. Plays a role in capsid stabilization through interaction with the major capsid protein L1. Once the virion enters the host cell, L2 escorts the genomic DNA into the nucleus by promoting escape from the endosomal compartments and traffic through the host Golgi network. Mechanistically, the C-terminus of L2 possesses a cell-penetrating peptide that protudes from the host endosome, interacts with host cytoplasmic retromer cargo and thereby mediates the capsid delivery to the host trans-Golgi network. Plays a role through its interaction with host dynein in the intracellular microtubule-dependent transport of viral capsid toward the nucleus. Mediates the viral genome import into the nucleus through binding to host importins. Once within the nucleus, L2 localizes viral genomes to host PML bodies in order to activate early gene expression for establishment of infection. Later on, promotes late gene expression by interacting with the viral E2 protein and by inhibiting its transcriptional activation functions. During virion assembly, encapsidates the genome by direct interaction with the viral DNA. This is Minor capsid protein L2 from Human papillomavirus 27.